A 179-amino-acid polypeptide reads, in one-letter code: Large ribosomal subunit protein uL6 (179 aa).

The protein belongs to the universal ribosomal protein uL6 family. In terms of assembly, part of the 50S ribosomal subunit.

This protein binds to the 23S rRNA, and is important in its secondary structure. It is located near the subunit interface in the base of the L7/L12 stalk, and near the tRNA binding site of the peptidyltransferase center. This is Large ribosomal subunit protein uL6 from Pseudomonas savastanoi pv. phaseolicola (strain 1448A / Race 6) (Pseudomonas syringae pv. phaseolicola (strain 1448A / Race 6)).